The sequence spans 880 residues: Paramyosin (880 aa).

The interval 1-34 (MSGSLYRSPSAALYKSPSMSAFGGLPAAFGSMSV) is nonhelical region. Residues 35 to 859 (ADLGSLTRLE…LIRAKHRHQL (825 aa)) are a coiled coil. The segment at 860 to 880 (LRAKMLQRQKFTFSKMSNRDN) is nonhelical region.

Belongs to the paramyosin family. As to quaternary structure, homodimer.

The protein resides in the cytoplasm. The protein localises to the myofibril. In terms of biological role, paramyosin is a major structural component of many thick filaments isolated from invertebrate muscles. The chain is Paramyosin from Brugia malayi (Filarial nematode worm).